The sequence spans 342 residues: Photosystem II assembly lipoprotein Ycf48 (342 aa).

Residues 1 to 28 form the signal peptide; sequence MPVKFPSLKFEQLKQLVLVAAIAVFCVS. Cys29 is lipidated: N-palmitoyl cysteine. Cys29 carries S-diacylglycerol cysteine lipidation. The Arg-rich patch motif lies at 196–220; the sequence is RGNFYSTWAPGQTEWTPHNRNSSRR. A propeptide spanning residues 340–342 is cleaved from the precursor; the sequence is MVP.

The protein belongs to the Ycf48 family. As to quaternary structure, part of early PSII assembly complexes which includes D1 (psbA) and PsbI; not found in mature PSII. By two-hybrid analysis in yeast interacts with precursor and intermediate forms of D1, but less with mature D1. Binds to the lumenal side of PSI and PSII complexes. Coimmunoprecipitates with YidC. Purified chlorophyll- and carotenoid-containing photosystem II (PSII) assembly intermediate complex RCII* (iD1, D1, D2, PsbE, PsbF, PsbI, Ycf39, Ycf48, HliC and HliD). The last 3 residues are removed in the mature protein.

The protein localises to the cellular thylakoid membrane. A factor required for optimal assembly of photosystem II (PSII) which acts in the early stages of PSII assembly. Also plays a role in replacement of photodamaged D1 (psbA). May interact with precursor D1 to prevent its premature processing before association with D2 (psbD). May also play a role in chlorophyll insertion into chlorophyll-binding proteins. Increasing levels of chlorophyll precursors partially suppresses deletion of this protein, supporting the idea that Ycf48 assists YidC in synthesis of chlorophyll-binding proteins. The Ycf39-Hlip complex binds D1 at an early stage of PSII assembly along with Ycf48, ribosomes and ChlG, the last enzyme in chlorophyll biosynthesis; it may be involved in chlorophyll reuse and delivery to D1 in the initial stages of PSII assembly. The polypeptide is Photosystem II assembly lipoprotein Ycf48 (Synechocystis sp. (strain ATCC 27184 / PCC 6803 / Kazusa)).